We begin with the raw amino-acid sequence, 325 residues long: Aldo-keto reductase family 1 member A1 (325 aa).

N-acetylalanine is present on alanine 2. At serine 4 the chain carries Phosphoserine. Residues 11-20, threonine 21, and tryptophan 22 each bind NADP(+); that span reads GQKMPLIGLG. Serine 38 is modified (phosphoserine). Aspartate 45 is a binding site for NADP(+). Residue tyrosine 50 is the Proton donor of the active site. Lysine 127 carries the N6-acetyllysine; alternate modification. Position 127 is an N6-succinyllysine; alternate (lysine 127). Position 145 is an N6-succinyllysine (lysine 145). NADP(+) contacts are provided by serine 162, asparagine 163, serine 211, leucine 213, serine 215, serine 216, lysine 263, serine 264, isoleucine 265, threonine 266, arginine 269, glutamine 272, and asparagine 273. Phosphoserine is present on serine 211.

It belongs to the aldo/keto reductase family. Monomer. In terms of tissue distribution, widely expressed. Highly expressed in kidney, salivary gland and liver. Detected in trachea, stomach, brain, lung, prostate, placenta, mammary gland, small intestine and lung.

It is found in the cytoplasm. The protein resides in the cytosol. It localises to the apical cell membrane. The enzyme catalyses a primary alcohol + NADP(+) = an aldehyde + NADPH + H(+). It catalyses the reaction allyl alcohol + NADP(+) = acrolein + NADPH + H(+). It carries out the reaction glycerol + NADP(+) = D-glyceraldehyde + NADPH + H(+). The catalysed reaction is glycerol + NADP(+) = L-glyceraldehyde + NADPH + H(+). The enzyme catalyses hydroxyacetone + NADP(+) = methylglyoxal + NADPH + H(+). It catalyses the reaction a 4-hydroxynonen-1-ol + NADP(+) = a 4-hydroxynonenal + NADPH + H(+). It carries out the reaction 3-deoxyfructose + NADP(+) = 3-deoxyglucosone + NADPH + H(+). The catalysed reaction is L-gulonate + NADP(+) = aldehydo-D-glucuronate + NADPH + H(+). The enzyme catalyses L-gulono-1,4-lactone + NADP(+) = D-glucurono-3,6-lactone + NADPH + H(+). It catalyses the reaction pyridine 3-methanol + NADP(+) = pyridine-3-carbaldehyde + NADPH + H(+). It carries out the reaction S-nitroso-CoA + NADPH + H(+) = sulfinamide-CoA + NADP(+). The catalysed reaction is S-nitrosoglutathione + NADPH + H(+) = S-(hydroxysulfenamide)glutathione + NADP(+). Its function is as follows. Catalyzes the NADPH-dependent reduction of a wide variety of carbonyl-containing compounds to their corresponding alcohols. Displays enzymatic activity towards endogenous metabolites such as aromatic and aliphatic aldehydes, ketones, monosaccharides and bile acids, with a preference for negatively charged substrates, such as glucuronate and succinic semialdehyde. Functions as a detoxifiying enzyme by reducing a range of toxic aldehydes. Reduces methylglyoxal and 3-deoxyglucosone, which are present at elevated levels under hyperglycemic conditions and are cytotoxic. Involved also in the detoxification of lipid-derived aldehydes like acrolein. Plays a role in the activation of procarcinogens, such as polycyclic aromatic hydrocarbon trans-dihydrodiols, and in the metabolism of various xenobiotics and drugs, including the anthracyclines doxorubicin (DOX) and daunorubicin (DAUN). Also acts as an inhibitor of protein S-nitrosylation by mediating degradation of S-nitroso-coenzyme A (S-nitroso-CoA), a cofactor required to S-nitrosylate proteins. S-nitroso-CoA reductase activity is involved in reprogramming intermediary metabolism in renal proximal tubules, notably by inhibiting protein S-nitrosylation of isoform 2 of PKM (PKM2). Also acts as a S-nitroso-glutathione reductase by catalyzing the NADPH-dependent reduction of S-nitrosoglutathione. Displays no reductase activity towards retinoids. This is Aldo-keto reductase family 1 member A1 (AKR1A1) from Homo sapiens (Human).